We begin with the raw amino-acid sequence, 1230 residues long: Cullin-associated NEDD8-dissociated protein 1 (1230 aa).

Ala-2 carries the N-acetylalanine modification. HEAT repeat units follow at residues 2 to 39 (ASAS…KDSI), 44 to 81 (DSER…KVKE), 83 to 119 (QVET…ELPP), 131 to 165 (CKKI…LSRQ), 171 to 208 (NFHP…SCGN), 210 to 247 (VFVD…QAGH), 248 to 282 (RIGE…FESF), 289 to 366 (EVYP…TRHE), 370 to 407 (EFYK…QTRP), 424 to 467 (PLTM…VLPG), 471 to 510 (QHIP…NHSP), and 515 to 552 (PHVQ…VIRP). The residue at position 55 (Lys-55) is an N6-acetyllysine. The disordered stretch occupies residues 315 to 344 (DEDEDENAMDADGGDDDDQGSDDEYSDDDD). The residue at position 335 (Ser-335) is a Phosphoserine. Phosphoserine is present on Ser-558. 15 HEAT repeats span residues 563 to 602 (PYIK…NLGD), 606 to 643 (PDLS…LKID), 646 to 683 (PVLG…NYSD), 688 to 725 (AMID…VYPS), 729 to 768 (KISG…TGTN), 770 to 808 (LGYM…ALTR), 809 to 845 (ACPK…LGEV), 852 to 889 (SGQL…GNLP), 890 to 927 (EYLP…GLKP), 928 to 960 (YVEN…KLTL), 961 to 998 (IDPE…DHPQ), 1002 to 1039 (PLLK…NKPS), 1043 to 1097 (DLLD…DSCL), 1099 to 1133 (RLDI…LSTL), and 1140 to 1189 (QRLD…IPEA). N6-acetyllysine is present on Lys-971.

This sequence belongs to the CAND family. Interacts with TBP. Part of a complex that contains CUL1 and RBX1. Interacts with unneddylated cullins: interacts with CUL1, CUL2, CUL3, CUL4A, CUL4B and CUL5. Does not bind neddylated CUL1. Interaction with cullins is abolished in presence of COMMD1, which antagonizes with CAND1 for interacting with cullins. Interacts with ERCC6. Interacts with DCUN1D1, DCUN1D2, DCUN1D3, DCUN1D4 and DCUN1D5; these interactions are bridged by cullins and strongly inhibits the neddylation of cullins. In terms of tissue distribution, detected in heart, brain, spleen, liver, skeletal muscle, kidney and testis.

The protein localises to the cytoplasm. It localises to the nucleus. Key assembly factor of SCF (SKP1-CUL1-F-box protein) E3 ubiquitin ligase complexes that promotes the exchange of the substrate-recognition F-box subunit in SCF complexes, thereby playing a key role in the cellular repertoire of SCF complexes. Acts as a F-box protein exchange factor. The exchange activity of CAND1 is coupled with cycles of neddylation conjugation: in the deneddylated state, cullin-binding CAND1 binds CUL1-RBX1, increasing dissociation of the SCF complex and promoting exchange of the F-box protein. Probably plays a similar role in other cullin-RING E3 ubiquitin ligase complexes. May indirectly enhance transcription from various types of promoters. This Rattus norvegicus (Rat) protein is Cullin-associated NEDD8-dissociated protein 1 (Cand1).